The sequence spans 329 residues: uncharacterized protein (329 aa).

Disordered stretches follow at residues 16 to 41 and 183 to 229; these read RCGY…SRIC and LENK…KFEP. The segment covering 213 to 229 has biased composition (basic and acidic residues); that stretch reads SNDKANRGEKGEAKFEP.

In terms of tissue distribution, expressed in testis and epididymis. Expressed at lower levels in ovary.

Its function is as follows. Dispensable for normal development and fertility. This is an uncharacterized protein from Mus musculus (Mouse).